Here is a 415-residue protein sequence, read N- to C-terminus: Glycerate 2-kinase (415 aa).

Lys-57 is a binding site for substrate.

Belongs to the glycerate kinase type-1 family. In terms of assembly, homodimer. Mg(2+) is required as a cofactor. Requires Ni(2+) as cofactor. Mn(2+) serves as cofactor. It depends on Co(2+) as a cofactor.

It carries out the reaction (R)-glycerate + ATP = (2R)-2-phosphoglycerate + ADP + H(+). Its function is as follows. Catalyzes the ATP-dependent phosphorylation of D-glycerate to 2-phosphoglycerate. It can also partially utilize GTP, CTP or UTP as phosphate donor. In Picrophilus torridus (strain ATCC 700027 / DSM 9790 / JCM 10055 / NBRC 100828 / KAW 2/3), this protein is Glycerate 2-kinase (gck).